We begin with the raw amino-acid sequence, 185 residues long: Histone H1-delta (185 aa).

Disordered stretches follow at residues 1–37 and 90–185; these read MADT…PKYS and RHVK…GKKK. One can recognise an H15 domain in the interval 32–105; sequence SHPKYSDMIA…GASGSFLLAE (74 aa). Residues 109–185 show a composition bias toward basic residues; the sequence is TPKKAAAKKA…KAAKGKGKKK (77 aa).

This sequence belongs to the histone H1/H5 family.

It is found in the nucleus. It localises to the chromosome. In terms of biological role, histones H1 are necessary for the condensation of nucleosome chains into higher-order structures. The polypeptide is Histone H1-delta (Strongylocentrotus purpuratus (Purple sea urchin)).